The following is a 1159-amino-acid chain: ATP-dependent helicase/deoxyribonuclease subunit B (1159 aa).

The UvrD-like helicase ATP-binding domain maps to 1–401 (MSIRFVYGRS…LLKNWSYESV (401 aa)). Residue 8–15 (GRSGTGKS) participates in ATP binding. Residues 279-582 (PYRFKGNLEL…NIGDIARIKG (304 aa)) enclose the UvrD-like helicase C-terminal domain. Positions 787, 1106, 1109, and 1115 each coordinate [4Fe-4S] cluster.

Belongs to the helicase family. AddB/RexB type 1 subfamily. As to quaternary structure, heterodimer of AddA and AddB. Mg(2+) is required as a cofactor. [4Fe-4S] cluster serves as cofactor.

Its function is as follows. The heterodimer acts as both an ATP-dependent DNA helicase and an ATP-dependent, dual-direction single-stranded exonuclease. Recognizes the chi site generating a DNA molecule suitable for the initiation of homologous recombination. The AddB subunit has 5' -&gt; 3' nuclease activity but not helicase activity. The sequence is that of ATP-dependent helicase/deoxyribonuclease subunit B from Clostridium beijerinckii (strain ATCC 51743 / NCIMB 8052) (Clostridium acetobutylicum).